A 176-amino-acid chain; its full sequence is Peptide deformylase 1 (176 aa).

Fe cation-binding residues include C99 and H141. E142 is a catalytic residue. H145 is a binding site for Fe cation.

Belongs to the polypeptide deformylase family. It depends on Fe(2+) as a cofactor.

The catalysed reaction is N-terminal N-formyl-L-methionyl-[peptide] + H2O = N-terminal L-methionyl-[peptide] + formate. Functionally, removes the formyl group from the N-terminal Met of newly synthesized proteins. Requires at least a dipeptide for an efficient rate of reaction. N-terminal L-methionine is a prerequisite for activity but the enzyme has broad specificity at other positions. The sequence is that of Peptide deformylase 1 from Bordetella pertussis (strain Tohama I / ATCC BAA-589 / NCTC 13251).